Here is a 501-residue protein sequence, read N- to C-terminus: Alveolysin (501 aa).

The signal sequence occupies residues 1–32; it reads MKKKSNHLKGRKVLVSLLVSLQVFAFASISSA. 4 consecutive transmembrane segments (beta stranded) span residues 191-204, 211-220, 289-298, and 306-318; these read QNQI…NAKV, IDFNAVANGE, SNDVQTAFKL, and QASG…YENS. Positions 460–470 match the Conserved undecapeptide motif; it reads ECTGLAWEWWR. Residues 492–493 carry the Cholesterol binding motif; sequence TL.

This sequence belongs to the cholesterol-dependent cytolysin family. As to quaternary structure, homooligomeric pore complex of 35 to 50 subunits; when inserted in the host membrane.

The protein localises to the secreted. Its subcellular location is the host cell membrane. Inhibited by cholesterol and thiol reagents. Functionally, a cholesterol-dependent toxin that causes cytolysis by forming pores in cholesterol containing host membranes. After binding to target membranes, the protein undergoes a major conformation change, leading to its insertion in the host membrane and formation of an oligomeric pore complex. Cholesterol is required for binding to host cell membranes, membrane insertion and pore formation; cholesterol binding is mediated by a Thr-Leu pair in the C-terminus. Can be reversibly inactivated by oxidation. The protein is Alveolysin (alv) of Paenibacillus alvei (Bacillus alvei).